A 43-amino-acid chain; its full sequence is Hemolysin H3C (43 aa).

Residue Met-1 is modified to N-formylmethionine.

The protein belongs to the staphylococcal hemolytic protein family.

The protein localises to the secreted. Virulence factor. Causes hemolysis of erythrocytes from sheep (HD(50)=2.63 mM), rabbit (HD(50)=2.37 mM), guinea pig (HD(50)=1.98 mM), dog (HD(50)=1.02 mM) and human (HD(50)=2.07 mM). Acts synergistically with beta-hemolysins from S.aureus ATCC 25923. Cytotoxic towards human dermal fibroblasts. In Staphylococcus cohnii subsp. cohnii, this protein is Hemolysin H3C.